A 319-amino-acid chain; its full sequence is Acetyl-coenzyme A carboxylase carboxyl transferase subunit alpha (319 aa).

The 256-residue stretch at histidine 38–alanine 293 folds into the CoA carboxyltransferase C-terminal domain.

Belongs to the AccA family. Acetyl-CoA carboxylase is a heterohexamer composed of biotin carboxyl carrier protein (AccB), biotin carboxylase (AccC) and two subunits each of ACCase subunit alpha (AccA) and ACCase subunit beta (AccD).

The protein localises to the cytoplasm. It carries out the reaction N(6)-carboxybiotinyl-L-lysyl-[protein] + acetyl-CoA = N(6)-biotinyl-L-lysyl-[protein] + malonyl-CoA. It participates in lipid metabolism; malonyl-CoA biosynthesis; malonyl-CoA from acetyl-CoA: step 1/1. Functionally, component of the acetyl coenzyme A carboxylase (ACC) complex. First, biotin carboxylase catalyzes the carboxylation of biotin on its carrier protein (BCCP) and then the CO(2) group is transferred by the carboxyltransferase to acetyl-CoA to form malonyl-CoA. In Stenotrophomonas maltophilia (strain R551-3), this protein is Acetyl-coenzyme A carboxylase carboxyl transferase subunit alpha.